The sequence spans 215 residues: Probable phosphoglycerate mutase GpmB (215 aa).

Substrate-binding positions include 8-15, 21-22, arginine 58, lysine 60, 82-85, 104-105, and 151-152; these read RHGETQWN, QG, ELDM, RR, and GI. Residue histidine 9 is the Tele-phosphohistidine intermediate of the active site. Glutamate 82 functions as the Proton donor/acceptor in the catalytic mechanism.

Belongs to the phosphoglycerate mutase family. GpmB subfamily.

The enzyme catalyses (2R)-2-phosphoglycerate = (2R)-3-phosphoglycerate. Its pathway is carbohydrate degradation; glycolysis; pyruvate from D-glyceraldehyde 3-phosphate: step 3/5. The chain is Probable phosphoglycerate mutase GpmB from Salmonella paratyphi A (strain AKU_12601).